Reading from the N-terminus, the 718-residue chain is Glycine--tRNA ligase beta subunit (718 aa).

It belongs to the class-II aminoacyl-tRNA synthetase family. In terms of assembly, tetramer of two alpha and two beta subunits.

Its subcellular location is the cytoplasm. It catalyses the reaction tRNA(Gly) + glycine + ATP = glycyl-tRNA(Gly) + AMP + diphosphate. The chain is Glycine--tRNA ligase beta subunit from Mesorhizobium japonicum (strain LMG 29417 / CECT 9101 / MAFF 303099) (Mesorhizobium loti (strain MAFF 303099)).